A 362-amino-acid polypeptide reads, in one-letter code: EARP-interacting protein 1 (362 aa).

4 WD repeats span residues 61-108 (HPAG…RTLE), 206-246 (AHIH…SALT), 250-290 (PHAH…SEQQ), and 319-359 (EHED…KYAL).

This sequence belongs to the WD repeat EIPR1 family. In terms of tissue distribution, expressed in the hypodermis and the pharynx.

It is found in the cytoplasm. Plays a role in the trafficking of cargo to dense-core vesicles, probably through association with the endosome-associated recycling protein (EARP) complex. Important for neuronal function. This Caenorhabditis elegans protein is EARP-interacting protein 1.